The following is a 136-amino-acid chain: Large-conductance mechanosensitive channel (136 aa).

Helical transmembrane passes span 10-30 (FAMRGNVVDLAVGVIIGAAFG) and 76-96 (GSFIQSVFDFVIVALAIFSAV).

This sequence belongs to the MscL family. As to quaternary structure, homopentamer.

Its subcellular location is the cell inner membrane. Its function is as follows. Channel that opens in response to stretch forces in the membrane lipid bilayer. May participate in the regulation of osmotic pressure changes within the cell. This is Large-conductance mechanosensitive channel from Yersinia enterocolitica serotype O:8 / biotype 1B (strain NCTC 13174 / 8081).